Reading from the N-terminus, the 264-residue chain is MKQYLELMQKVLDEGTQKNDRTGTGTLSIFGHQMRFNLQEGFPLVTTKHCHLRSIIHELLWFLQGDTNIAYLHENNVTIWDEWADENGDLGPVYGKQWRAWPTPDGRHIDQIATVLSQLKNDPDSRRIIVSAWNVGELDKMALAPCHAFFQFYVADGKLSCQLYQRSCDVFLGLPFNIASYALLVHMMAQQCDLDVGDFVWTGGDTHLYSNHMEQTHLQLSREPRALPKLVIKRKPDSLFDYRFDDFEIEGYDPHPGIKAPVAI.

R21 lines the dUMP pocket. (6R)-5,10-methylene-5,6,7,8-tetrahydrofolate is bound at residue H51. DUMP is bound at residue 126-127 (RR). Catalysis depends on C146, which acts as the Nucleophile. DUMP is bound by residues 166–169 (RSCD), N177, and 207–209 (HLY). D169 serves as a coordination point for (6R)-5,10-methylene-5,6,7,8-tetrahydrofolate. (6R)-5,10-methylene-5,6,7,8-tetrahydrofolate is bound at residue A263.

This sequence belongs to the thymidylate synthase family. Bacterial-type ThyA subfamily. As to quaternary structure, homodimer.

Its subcellular location is the cytoplasm. The enzyme catalyses dUMP + (6R)-5,10-methylene-5,6,7,8-tetrahydrofolate = 7,8-dihydrofolate + dTMP. It participates in pyrimidine metabolism; dTTP biosynthesis. Catalyzes the reductive methylation of 2'-deoxyuridine-5'-monophosphate (dUMP) to 2'-deoxythymidine-5'-monophosphate (dTMP) while utilizing 5,10-methylenetetrahydrofolate (mTHF) as the methyl donor and reductant in the reaction, yielding dihydrofolate (DHF) as a by-product. This enzymatic reaction provides an intracellular de novo source of dTMP, an essential precursor for DNA biosynthesis. This chain is Thymidylate synthase, found in Salmonella paratyphi C (strain RKS4594).